Here is a 332-residue protein sequence, read N- to C-terminus: Fructose-1,6-bisphosphatase class 1 (332 aa).

Positions 89, 110, 112, and 113 each coordinate Mg(2+). Residues 113–116 (DGSS), asparagine 206, tyrosine 239, 257–259 (YLY), and lysine 269 each bind substrate. Mg(2+) is bound at residue glutamate 275.

The protein belongs to the FBPase class 1 family. Homotetramer. The cofactor is Mg(2+).

It is found in the cytoplasm. The enzyme catalyses beta-D-fructose 1,6-bisphosphate + H2O = beta-D-fructose 6-phosphate + phosphate. Its pathway is carbohydrate biosynthesis; gluconeogenesis. The chain is Fructose-1,6-bisphosphatase class 1 from Klebsiella pneumoniae subsp. pneumoniae (strain ATCC 700721 / MGH 78578).